The following is a 67-amino-acid chain: UPF0337 protein SP_1805 (67 aa).

The disordered stretch occupies residues 1–30 (MSVEEKLNQAKGSIKEGVGKAIGDEKMEKE).

It belongs to the UPF0337 (CsbD) family.

In Streptococcus pneumoniae serotype 4 (strain ATCC BAA-334 / TIGR4), this protein is UPF0337 protein SP_1805.